A 20-amino-acid polypeptide reads, in one-letter code: DnaJ homolog subfamily C member 1 (20 aa).

Residues 1–20 are Lumenal-facing; it reads WESGDLELFDLVEEVXLNFY. Residues 18-20 form the J domain; it reads NFY.

As to quaternary structure, interacts (via SANT 2 domain) with SERPINA3; the interaction delays the formation of the covalent inhibitory complex SERPINA3-chymotrypsin, but does not alter the catalytic activity of SERPINA3. Interacts (via SANT 2 domain) with ITIH4 (via C-terminus); the interaction protects ITIH4 against in vitro cleavage by kallikrein. Interacts (via J domain) with HSPA5. Interacts (via cytosolic domain) with ribosomes.

The protein localises to the endoplasmic reticulum membrane. It is found in the nucleus membrane. It localises to the microsome membrane. This Canis lupus familiaris (Dog) protein is DnaJ homolog subfamily C member 1 (DNAJC1).